Reading from the N-terminus, the 378-residue chain is Mevalonate kinase (378 aa).

Residues lysine 10, serine 138, and 143–149 (GSGLGSS) contribute to the ATP site. Mg(2+) is bound by residues serine 149 and glutamate 193. The Proton acceptor role is filled by aspartate 204.

The protein belongs to the GHMP kinase family. Mevalonate kinase subfamily. Mg(2+) serves as cofactor.

Its subcellular location is the cytoplasm. The catalysed reaction is (R)-mevalonate + ATP = (R)-5-phosphomevalonate + ADP + H(+). Its pathway is isoprenoid biosynthesis; isopentenyl diphosphate biosynthesis via mevalonate pathway; isopentenyl diphosphate from (R)-mevalonate: step 1/3. Its activity is inhibited in vitro by geranyl pyrophosphate (GPP) and farnesyl pyrophosphate (FPP) that bind competitively at the ATP-binding site on the enzyme. Functionally, catalyzes the phosphorylation of mevalonate to mevalonate 5-phosphate, a key step in isoprenoid and cholesterol biosynthesis. The protein is Mevalonate kinase of Arabidopsis thaliana (Mouse-ear cress).